Consider the following 852-residue polypeptide: Protein mono-ADP-ribosyltransferase PARP8 (852 aa).

Disordered regions lie at residues 113-134 (NGEE…NDSE) and 289-310 (SPSY…EQDG). Acidic residues predominate over residues 123-134 (VEEDSEGDNDSE). ADP-ribosylcysteine is present on residues Cys-332, Cys-366, Cys-375, and Cys-394. In terms of domain architecture, PARP catalytic spans 615 to 842 (EMTQAPYLEI…QEGGIHKEIL (228 aa)). The interval 748–775 (QKVSSKDEPASSSKSSNASQSQKKGQQS) is disordered. A compositionally biased stretch (low complexity) spans 757–775 (ASSSKSSNASQSQKKGQQS).

It belongs to the ARTD/PARP family. Auto-mono-ADP-ribosylated.

It catalyses the reaction L-cysteinyl-[protein] + NAD(+) = S-(ADP-D-ribosyl)-L-cysteinyl-[protein] + nicotinamide + H(+). In terms of biological role, mono-ADP-ribosyltransferase that mediates mono-ADP-ribosylation of target proteins. This Mus musculus (Mouse) protein is Protein mono-ADP-ribosyltransferase PARP8.